The following is an 85-amino-acid chain: Small ribosomal subunit protein uS17 (85 aa).

It belongs to the universal ribosomal protein uS17 family. As to quaternary structure, part of the 30S ribosomal subunit.

Its function is as follows. One of the primary rRNA binding proteins, it binds specifically to the 5'-end of 16S ribosomal RNA. The chain is Small ribosomal subunit protein uS17 from Lachnoclostridium phytofermentans (strain ATCC 700394 / DSM 18823 / ISDg) (Clostridium phytofermentans).